Reading from the N-terminus, the 131-residue chain is MTKKTIYFICTGNSCRSQMAEGWAKQILAEDWNVYSAGIETHGVNPKAIEAMKEVGIDISNHTSDLIDNNIIKNSNLVVTLCSDADVNCPSLPANVKKEHWGFDNPAGKPWSEFQRVRDEIKIAIENFKSR.

Residues C10, C82, and C89 each act as nucleophile in the active site. 2 cysteine pairs are disulfide-bonded: C10–C82 and C82–C89.

Belongs to the low molecular weight phosphotyrosine protein phosphatase family. Thioredoxin-coupled ArsC subfamily.

It is found in the cytoplasm. It catalyses the reaction arsenate + [thioredoxin]-dithiol + H(+) = arsenite + [thioredoxin]-disulfide + H2O. Its function is as follows. Catalyzes the reduction of arsenate [As(V)] to arsenite [As(III)]. This chain is Arsenate reductase, found in Staphylococcus aureus (strain bovine RF122 / ET3-1).